We begin with the raw amino-acid sequence, 417 residues long: Serine hydroxymethyltransferase (417 aa).

(6S)-5,6,7,8-tetrahydrofolate is bound by residues Leu122 and 126–128 (GHL). The residue at position 231 (Lys231) is an N6-(pyridoxal phosphate)lysine.

This sequence belongs to the SHMT family. In terms of assembly, homodimer. It depends on pyridoxal 5'-phosphate as a cofactor.

It localises to the cytoplasm. The catalysed reaction is (6R)-5,10-methylene-5,6,7,8-tetrahydrofolate + glycine + H2O = (6S)-5,6,7,8-tetrahydrofolate + L-serine. Its pathway is one-carbon metabolism; tetrahydrofolate interconversion. It participates in amino-acid biosynthesis; glycine biosynthesis; glycine from L-serine: step 1/1. Its function is as follows. Catalyzes the reversible interconversion of serine and glycine with tetrahydrofolate (THF) serving as the one-carbon carrier. This reaction serves as the major source of one-carbon groups required for the biosynthesis of purines, thymidylate, methionine, and other important biomolecules. Also exhibits THF-independent aldolase activity toward beta-hydroxyamino acids, producing glycine and aldehydes, via a retro-aldol mechanism. This chain is Serine hydroxymethyltransferase, found in Caldicellulosiruptor saccharolyticus (strain ATCC 43494 / DSM 8903 / Tp8T 6331).